A 204-amino-acid polypeptide reads, in one-letter code: MGAYRYMQKLWRKKQSDVMRFLLRVRCWQYRQLSALHRAPRPTRPDKARRLGYKAKQGYVIYRVRVRRGGRKRPVPKGATYGKPVHHGVNQIKFARSLQSVAEERAGRHCGGLRVLSSYWVGEDSTYKFFEVILVDIFHKAIRRNPDTQWITKAVHKHREMRGLTSAGKKSRGLGKGHKFHLTIGGSRRAAWRRRNTLQLHRYR.

The protein belongs to the eukaryotic ribosomal protein eL15 family. In terms of assembly, component of the large ribosomal subunit.

It localises to the cytoplasm. Its function is as follows. Component of the large ribosomal subunit. The ribosome is a large ribonucleoprotein complex responsible for the synthesis of proteins in the cell. The polypeptide is Large ribosomal subunit protein eL15 (rpl15) (Tachysurus fulvidraco (Yellow catfish)).